A 584-amino-acid chain; its full sequence is UvrABC system protein C (584 aa).

One can recognise a GIY-YIG domain in the interval 14-91; it reads HKPGCYLWKD…IKTHLPKYNI (78 aa). A UVR domain is found at 192–227; it reads DHILMILQTKEQHAVTKLDFENAQKYAEQQKALTSI.

It belongs to the UvrC family. As to quaternary structure, interacts with UvrB in an incision complex.

It is found in the cytoplasm. Its function is as follows. The UvrABC repair system catalyzes the recognition and processing of DNA lesions. UvrC both incises the 5' and 3' sides of the lesion. The N-terminal half is responsible for the 3' incision and the C-terminal half is responsible for the 5' incision. In Ureaplasma parvum serovar 3 (strain ATCC 27815 / 27 / NCTC 11736), this protein is UvrABC system protein C.